The sequence spans 483 residues: Glutamyl-tRNA(Gln) amidotransferase subunit A (483 aa).

Catalysis depends on charge relay system residues Lys76 and Ser151. The active-site Acyl-ester intermediate is the Ser175.

The protein belongs to the amidase family. GatA subfamily. Heterotrimer of A, B and C subunits.

The enzyme catalyses L-glutamyl-tRNA(Gln) + L-glutamine + ATP + H2O = L-glutaminyl-tRNA(Gln) + L-glutamate + ADP + phosphate + H(+). In terms of biological role, allows the formation of correctly charged Gln-tRNA(Gln) through the transamidation of misacylated Glu-tRNA(Gln) in organisms which lack glutaminyl-tRNA synthetase. The reaction takes place in the presence of glutamine and ATP through an activated gamma-phospho-Glu-tRNA(Gln). The polypeptide is Glutamyl-tRNA(Gln) amidotransferase subunit A (Pseudomonas putida (strain W619)).